The following is a 228-amino-acid chain: Ras-related protein Rab-32D (228 aa).

16-23 (GDVNVGKT) is a binding site for GTP. The short motif at 38–46 (YKSTIGADF) is the Effector region element. Residues 64-68 (DTAGQ) and 128-131 (NKSD) contribute to the GTP site. Positions 183 to 228 (SDNEQFNDSPDEETSSITLLGTSKKHDNTNPNKPSTSSPSSCFNCK) are disordered. Over residues 185–196 (NEQFNDSPDEET) the composition is skewed to acidic residues. Residues 211–228 (TNPNKPSTSSPSSCFNCK) show a composition bias toward low complexity. Cys224 carries S-geranylgeranyl cysteine lipidation.

It belongs to the small GTPase superfamily. Rab family.

In Dictyostelium discoideum (Social amoeba), this protein is Ras-related protein Rab-32D (rab32D).